The chain runs to 264 residues: 3-methyl-2-oxobutanoate hydroxymethyltransferase (264 aa).

Residues Asp45 and Asp84 each coordinate Mg(2+). 3-methyl-2-oxobutanoate contacts are provided by residues 45–46, Asp84, and Lys112; that span reads DS. Glu114 is a Mg(2+) binding site. The Proton acceptor role is filled by Glu181.

Belongs to the PanB family. In terms of assembly, homodecamer; pentamer of dimers. It depends on Mg(2+) as a cofactor.

It localises to the cytoplasm. It carries out the reaction 3-methyl-2-oxobutanoate + (6R)-5,10-methylene-5,6,7,8-tetrahydrofolate + H2O = 2-dehydropantoate + (6S)-5,6,7,8-tetrahydrofolate. Its pathway is cofactor biosynthesis; (R)-pantothenate biosynthesis; (R)-pantoate from 3-methyl-2-oxobutanoate: step 1/2. Functionally, catalyzes the reversible reaction in which hydroxymethyl group from 5,10-methylenetetrahydrofolate is transferred onto alpha-ketoisovalerate to form ketopantoate. This chain is 3-methyl-2-oxobutanoate hydroxymethyltransferase, found in Cronobacter sakazakii (strain ATCC BAA-894) (Enterobacter sakazakii).